The primary structure comprises 412 residues: Alanyl-tRNA editing protein Aarsd1 (412 aa).

His109 and His113 together coordinate Zn(2+). Ser174 carries the post-translational modification Phosphoserine. Zn(2+) contacts are provided by Cys209 and His213.

It belongs to the class-II aminoacyl-tRNA synthetase family. Alax-L subfamily. The cofactor is Zn(2+).

It is found in the cytoplasm. Functions in trans to edit the amino acid moiety from incorrectly charged tRNA(Ala). This Homo sapiens (Human) protein is Alanyl-tRNA editing protein Aarsd1 (AARSD1).